The primary structure comprises 174 residues: MKLSNKSQALYDMIAPAVEACGVDLWGIEFLPQGKRSLLRIYIDRTVDENAEPVINEDGEVEQGRGIGVEDCVRVTQQVGAMLDVHDPISGEYALEVSSPGWDRPFFQLEQLQGYIGQQVALRLIAAVENRRKFQAKLLAVDLENEEIQVEVEGKHVLDIDSNNIDKANLIYQD.

The protein belongs to the RimP family.

It localises to the cytoplasm. Functionally, required for maturation of 30S ribosomal subunits. In Acinetobacter baumannii (strain SDF), this protein is Ribosome maturation factor RimP.